A 283-amino-acid polypeptide reads, in one-letter code: Bifunctional protein FolD (283 aa).

NADP(+) contacts are provided by residues 166-168 and S191; that span reads GRS.

This sequence belongs to the tetrahydrofolate dehydrogenase/cyclohydrolase family. In terms of assembly, homodimer.

It catalyses the reaction (6R)-5,10-methylene-5,6,7,8-tetrahydrofolate + NADP(+) = (6R)-5,10-methenyltetrahydrofolate + NADPH. It carries out the reaction (6R)-5,10-methenyltetrahydrofolate + H2O = (6R)-10-formyltetrahydrofolate + H(+). It functions in the pathway one-carbon metabolism; tetrahydrofolate interconversion. Catalyzes the oxidation of 5,10-methylenetetrahydrofolate to 5,10-methenyltetrahydrofolate and then the hydrolysis of 5,10-methenyltetrahydrofolate to 10-formyltetrahydrofolate. The protein is Bifunctional protein FolD of Pediococcus pentosaceus (strain ATCC 25745 / CCUG 21536 / LMG 10740 / 183-1w).